The sequence spans 613 residues: TANK-binding kinase 1-binding protein 1 (613 aa).

Positions 1-280 (MESMFEDDIS…QDLASNQSEC (280 aa)) are homodimerization. A coiled-coil region spans residues 48-162 (YGDIKERLGG…ALVETHLRQI (115 aa)). Ser-184 is subject to Phosphoserine. Positions 218–277 (TSVSVSELERRRLEEALEAAQGEARGAQLREEQLQAECERLQGELKQLQETRAQDLASNQ) form a coiled coil. The interaction with TBK1 and IKBKE stretch occupies residues 281-330 (GMAWVKRVGDDQVNLALAYTELTEELGRLRELSSLQGRILRTLLQEQARN). The interval 328 to 457 (ARNAGQRHSP…HHAKAGFQGR (130 aa)) is disordered. Residues 346-361 (PACPSPSPPARPPPCA) show a composition bias toward pro residues. Low complexity predominate over residues 362-372 (PCQSPAAQRRS). A phosphoserine mark is found at Ser-365, Ser-372, Ser-379, Ser-385, Ser-400, and Ser-415. Over residues 389–406 (PSCPSPVPQRRSPVPPSC) the composition is skewed to pro residues. Positions 416 to 433 (PVPPSCPAPQPRPPPPPG) are enriched in pro residues. Phosphoserine is present on residues Ser-502 and Ser-532. The segment at 581–607 (IRSCPLCQLGFPVGYPDDALIKHIDSH) adopts a UBZ1-type zinc-finger fold. Zn(2+)-binding residues include Cys-584, Cys-587, His-603, and His-607.

As to quaternary structure, homodimer. May form a heterodimer with NAP1. Interacts with TKB1 and IKBKE. Weakly interacts with DDX3X.

Its function is as follows. Adapter protein which constitutively binds TBK1 and IKBKE playing a role in antiviral innate immunity. Essential for the efficient induction of IRF-dependent transcription following infection with Sendai virus. This Rattus norvegicus (Rat) protein is TANK-binding kinase 1-binding protein 1.